A 323-amino-acid polypeptide reads, in one-letter code: MADQDVDLDSIIDRLLEVRGSRPGKQVQLLESEIRYLCTKAREIFISQPILLELEAPIKICGDIHGQYYDLLRLFEYGGFPPEANYLFLGDYVDRGKQSLETICLLLAYKIKYPENFFVLRGNHECASINRIYGFYDECKRRYNIKLWKTFTDCFNCLPIAAIIDEKIFTMHGGLSPDLNSMEQIRRVMRPTDIPDCGLLCDLLWSDPDKDITGWSENDRGVSFTFGPDVVSRFLQKHDMDLICRAHQVVEDGYEFFSKRQLVTLFSAPNYCGEFDNAGAMMSVDESLLCSFQILKPAEKKQKYVYGAMSSGRPITPPRKQKK.

Mn(2+) contacts are provided by aspartate 63, histidine 65, aspartate 91, and asparagine 123. Residue histidine 124 is the Proton donor of the active site. Residues histidine 172 and histidine 247 each contribute to the Mn(2+) site.

This sequence belongs to the PPP phosphatase family. PP-1 subfamily. Mn(2+) serves as cofactor.

It catalyses the reaction O-phospho-L-seryl-[protein] + H2O = L-seryl-[protein] + phosphate. It carries out the reaction O-phospho-L-threonyl-[protein] + H2O = L-threonyl-[protein] + phosphate. Plays an important role in the control of mitosis by reversing the action of the nimA kinase. The sequence is that of Serine/threonine-protein phosphatase PP1 (bimG) from Emericella nidulans (strain FGSC A4 / ATCC 38163 / CBS 112.46 / NRRL 194 / M139) (Aspergillus nidulans).